We begin with the raw amino-acid sequence, 196 residues long: MSSTLPDPHLDQLFVQARTHNAWTSKPVTDDTIHALYDLLKWAPTAANSNPGRFVFVRSAEAKARLLKSVAPGNVDKVKAAPCCVIVAYDTEFHDLLPQLFPARDMRSGFVGKPELITETAKRNSALQGAYLILAARALGLDAGPMSGFDHVALDAEFFPDGRWKSNFLCNIGYGDAEKLFPRNPRLAFEDACRVL.

It belongs to the nitroreductase family. HadB/RutE subfamily. FMN serves as cofactor.

The protein is Putative NADH dehydrogenase/NAD(P)H nitroreductase Rpal_4764 of Rhodopseudomonas palustris (strain TIE-1).